Here is a 479-residue protein sequence, read N- to C-terminus: Calcium uniporter protein, mitochondrial (479 aa).

Residues 1-54 (MNHALRRATLGLSPGLRASRLQQSFAKHQIPAVYRCEAASTPLQRAFTTSRCFR) constitute a mitochondrion transit peptide. At 55 to 323 (QETAAESEKD…DTLAHQGAHR (269 aa)) the chain is on the mitochondrial matrix side. Disordered stretches follow at residues 56 to 125 (ETAA…KGRL) and 206 to 238 (EADQNEQDGRKDDNKKKDNANVASYSGLGHEGP). Residues 59–79 (AESEKDDAARREEQSERARKR) are a coiled coil. A compositionally biased stretch (basic and acidic residues) spans 60–75 (ESEKDDAARREEQSER). Over residues 83–93 (NVTSGSSAQTL) the composition is skewed to polar residues. Composition is skewed to basic and acidic residues over residues 94-122 (ENDRPWHRADSGADPDAPKDVPENKDMKK) and 206-224 (EADQNEQDGRKDDNKKKDN). A helical membrane pass occupies residues 324-344 (LAQGGFAALAGWWGVVYYVTF). Residues 345–354 (HTQAGWDLVE) are Mitochondrial intermembrane-facing. The Selectivity filter motif lies at 350-358 (WDLVEPVTY). E354 is a Ca(2+) binding site. Residues 355 to 375 (PVTYLAGLTTVMGAYLWFLYI) form a helical membrane-spanning segment. Residues 376 to 479 (SRDLSYKAAM…GSSDKIKKKQ (104 aa)) are Mitochondrial matrix-facing. The segment covering 445 to 462 (KVLEEEKQGRDGTKVTEG) has biased composition (basic and acidic residues). Positions 445 to 479 (KVLEEEKQGRDGTKVTEGKDEDDGPGSSDKIKKKQ) are disordered.

This sequence belongs to the MCU (TC 1.A.77) family. Homotetramer, assembles in a dimer or dimers configuration with two interfaces.

It is found in the mitochondrion inner membrane. The enzyme catalyses Ca(2+)(in) = Ca(2+)(out). Its function is as follows. Highly selective calcium channel localized to the inner mitochondrial membrane, which mediates calcium uptake into the mitochondrial matrix. Mitochondrial calcium homeostasis plays key roles in cellular physiology and regulates ATP production, cytoplasmic calcium signals and activation of cell death pathways. Sufficient to operate as a pore-forming channel without the need of calcium-sensor or auxiliary subunit. This chain is Calcium uniporter protein, mitochondrial, found in Gibberella zeae (strain ATCC MYA-4620 / CBS 123657 / FGSC 9075 / NRRL 31084 / PH-1) (Wheat head blight fungus).